A 316-amino-acid chain; its full sequence is tRNA dimethylallyltransferase (316 aa).

17-24 (GPTASGKT) provides a ligand contact to ATP. 19-24 (TASGKT) contributes to the substrate binding site. Interaction with substrate tRNA stretches follow at residues 42 to 45 (DSAL), 166 to 170 (QRLSR), 247 to 252 (RCVGYR), and 280 to 287 (KRQITWLR).

This sequence belongs to the IPP transferase family. As to quaternary structure, monomer. Mg(2+) is required as a cofactor.

The enzyme catalyses adenosine(37) in tRNA + dimethylallyl diphosphate = N(6)-dimethylallyladenosine(37) in tRNA + diphosphate. Catalyzes the transfer of a dimethylallyl group onto the adenine at position 37 in tRNAs that read codons beginning with uridine, leading to the formation of N6-(dimethylallyl)adenosine (i(6)A). In Escherichia coli O127:H6 (strain E2348/69 / EPEC), this protein is tRNA dimethylallyltransferase.